Consider the following 420-residue polypeptide: 4-hydroxy-3-methylbut-2-en-1-yl diphosphate synthase (flavodoxin) (420 aa).

[4Fe-4S] cluster contacts are provided by C307, C310, C353, and E360.

Belongs to the IspG family. The cofactor is [4Fe-4S] cluster.

It catalyses the reaction (2E)-4-hydroxy-3-methylbut-2-enyl diphosphate + oxidized [flavodoxin] + H2O + 2 H(+) = 2-C-methyl-D-erythritol 2,4-cyclic diphosphate + reduced [flavodoxin]. It participates in isoprenoid biosynthesis; isopentenyl diphosphate biosynthesis via DXP pathway; isopentenyl diphosphate from 1-deoxy-D-xylulose 5-phosphate: step 5/6. Its function is as follows. Converts 2C-methyl-D-erythritol 2,4-cyclodiphosphate (ME-2,4cPP) into 1-hydroxy-2-methyl-2-(E)-butenyl 4-diphosphate. This Brucella suis biovar 1 (strain 1330) protein is 4-hydroxy-3-methylbut-2-en-1-yl diphosphate synthase (flavodoxin).